Consider the following 190-residue polypeptide: NADH-quinone oxidoreductase subunit B (190 aa).

Positions 69, 70, 134, and 164 each coordinate [4Fe-4S] cluster.

This sequence belongs to the complex I 20 kDa subunit family. NDH-1 is composed of 14 different subunits. Subunits NuoB, C, D, E, F, and G constitute the peripheral sector of the complex. It depends on [4Fe-4S] cluster as a cofactor.

Its subcellular location is the cell inner membrane. It catalyses the reaction a quinone + NADH + 5 H(+)(in) = a quinol + NAD(+) + 4 H(+)(out). Functionally, NDH-1 shuttles electrons from NADH, via FMN and iron-sulfur (Fe-S) centers, to quinones in the respiratory chain. Couples the redox reaction to proton translocation (for every two electrons transferred, four hydrogen ions are translocated across the cytoplasmic membrane), and thus conserves the redox energy in a proton gradient. This chain is NADH-quinone oxidoreductase subunit B, found in Hyphomonas neptunium (strain ATCC 15444).